Consider the following 282-residue polypeptide: Elongation factor Ts (282 aa).

The involved in Mg(2+) ion dislocation from EF-Tu stretch occupies residues 80 to 83; sequence TDFV.

The protein belongs to the EF-Ts family.

It is found in the cytoplasm. Associates with the EF-Tu.GDP complex and induces the exchange of GDP to GTP. It remains bound to the aminoacyl-tRNA.EF-Tu.GTP complex up to the GTP hydrolysis stage on the ribosome. This chain is Elongation factor Ts, found in Chlamydia trachomatis serovar A (strain ATCC VR-571B / DSM 19440 / HAR-13).